A 208-amino-acid chain; its full sequence is Myosin light chain 6B (208 aa).

The interval Met-1–Pro-51 is disordered. Low complexity predominate over residues Lys-10 to Val-40. EF-hand domains are found at residues Asp-64 to Asn-99, Gly-141 to Lys-176, and Lys-176 to Val-208.

Myosin is a hexamer of 2 heavy chains and 4 light chains.

Functionally, regulatory light chain of myosin. Does not bind calcium. In Homo sapiens (Human), this protein is Myosin light chain 6B (MYL6B).